The sequence spans 157 residues: Nascent polypeptide-associated complex subunit beta-1 (157 aa).

Disordered stretches follow at residues lysine 19–threonine 42 and glutamate 126–glutamate 157. The region spanning asparagine 38 to phenylalanine 103 is the NAC-A/B domain. Positions glutamate 126 to alanine 142 are enriched in basic and acidic residues. Threonine 151 carries the post-translational modification Phosphothreonine.

Belongs to the NAC-beta family. Part of the nascent polypeptide-associated complex (NAC), consisting of EGD2 and either EGD1 or BTT1. NAC associates with ribosomes via EGD1 or BTT1, and with the CCR4-NOT complex.

The protein localises to the cytoplasm. The protein resides in the nucleus. Its function is as follows. Component of the nascent polypeptide-associated complex (NAC), a dynamic component of the ribosomal exit tunnel, protecting the emerging polypeptides from interaction with other cytoplasmic proteins to ensure appropriate nascent protein targeting. The NAC complex also promotes mitochondrial protein import by enhancing productive ribosome interactions with the outer mitochondrial membrane and blocks the inappropriate interaction of ribosomes translating non-secretory nascent polypeptides with translocation sites in the membrane of the endoplasmic reticulum. EGD1 may act as a transcription factor that exert a negative effect on the expression of several genes that are transcribed by RNA polymerase II. The chain is Nascent polypeptide-associated complex subunit beta-1 (EGD1) from Saccharomyces cerevisiae (strain YJM789) (Baker's yeast).